We begin with the raw amino-acid sequence, 613 residues long: Cysteine--tRNA ligase (613 aa).

Positions 1–130 (MSAGAGTPRR…TRGGVARSGN (130 aa)) are disordered. Repeat copies occupy residues 36–49 (PTRG…RPGV), 50–63 (PTRG…RLGV), 64–77 (PARG…RPGV), 78–91 (PARE…RPGV), 92–105 (PTRG…RLGV), and 106–119 (PARG…RPGV). The tract at residues 36–119 (PTRGDKKRAR…DKKRARRPGV (84 aa)) is 6 X 14 AA tandem repeats of P-[TA]-R-G-D-K-K-R-A-[RP]-R-[PL]-G-V. The interval 148 to 613 (VTIRLYDTSA…QGPRWSLGSR (466 aa)) is cysteinyl-tRNA synthetase. Residue cysteine 176 coordinates Zn(2+). The 'HIGH' region signature appears at 178–188 (ATVQAAPHIGH). Zn(2+) is bound by residues cysteine 355, histidine 380, and glutamate 384. The 'KMSKS' region signature appears at 411-415 (KMSKS). Lysine 414 provides a ligand contact to ATP.

This sequence belongs to the class-I aminoacyl-tRNA synthetase family. As to quaternary structure, monomer. Requires Zn(2+) as cofactor.

Its subcellular location is the cytoplasm. The enzyme catalyses tRNA(Cys) + L-cysteine + ATP = L-cysteinyl-tRNA(Cys) + AMP + diphosphate. This is Cysteine--tRNA ligase from Streptomyces coelicolor (strain ATCC BAA-471 / A3(2) / M145).